Here is a 230-residue protein sequence, read N- to C-terminus: D-glycero-alpha-D-manno-heptose 1-phosphate guanylyltransferase (230 aa).

Belongs to the D-alpha-D-heptose-1-P guanylyltransferase family.

The enzyme catalyses D-glycero-alpha-D-manno-heptose 1-phosphate + GTP + H(+) = GDP-D-glycero-alpha-D-manno-heptose + diphosphate. It functions in the pathway nucleotide-sugar biosynthesis; GDP-D-glycero-alpha-D-manno-heptose biosynthesis; GDP-D-glycero-alpha-D-manno-heptose from D-glycero-alpha-D-manno-heptose 7-phosphate: step 3/3. The protein operates within cell surface structure biogenesis; S-layer biogenesis. In terms of biological role, catalyzes the GDP transfer from GTP to D-glycero-alpha-D-manno-heptose 1-phosphate, yielding GDP-D-alpha-D-heptose. Cannot use ATP, CTP, dTTP or UTP as substrate. The chain is D-glycero-alpha-D-manno-heptose 1-phosphate guanylyltransferase (hddC) from Aneurinibacillus thermoaerophilus.